The following is a 1253-amino-acid chain: Guanine nucleotide exchange factor SDC25 (1253 aa).

An SH3 domain is found at 26–98 (QPIDVVECTY…PPSFTRSILN (73 aa)). The tract at residues 624-649 (LNLDNAKDKKNGSQNTDIQEEEDEYE) is disordered. The N-terminal Ras-GEF domain maps to 782–914 (GPIVRIKGGS…ELLKEVNQKF (133 aa)). A Ras-GEF domain is found at 952 to 1199 (VDPVLFATQL…QYQLSLIIEP (248 aa)). The segment at 1202–1253 (RKKVVPNSNSNNKSQEKSRDDQTDEGKTSTKKDRFPKFQLHKTKKKAPKVSK) is disordered. Residues 1215-1237 (SQEKSRDDQTDEGKTSTKKDRFP) show a composition bias toward basic and acidic residues. The segment covering 1240–1253 (QLHKTKKKAPKVSK) has biased composition (basic residues).

Its function is as follows. Promotes the exchange of Ras-bound GDP by GTP. This is Guanine nucleotide exchange factor SDC25 (SDC25) from Saccharomyces cerevisiae (Baker's yeast).